The sequence spans 312 residues: MLLVKMTTHIFNADDLLQALQQAKAEKNFSSVFSLDWNKLRTAKRNTSVKYVTVYVIIKGKKAPLMFNFQNEKHVGTIPPSTDEEVIRMNAENPKFLVKKRDRDPCLQFNKYKISPPLEDDGLTVKKNEQGEEIYPGDEEKSKLFQIIELLEEAFEDAVQKGPETMKTKHVIKLIQRKISNSAAKNADKPLPNPIARIRIKINSGTNILTPILLNKSKPITLQNGKTSFEELKDEDGVKANPDNIHKLIESHSIHDGIINARSICISNMGISFPLCLEMGVVKVFEKNNGIDVDSIYSSDDISTLVNQIAIA.

This sequence belongs to the asfivirus CP312R family.

The protein localises to the virion. This is an uncharacterized protein from African swine fever virus (isolate Warthog/Namibia/Wart80/1980) (ASFV).